Consider the following 89-residue polypeptide: Small ribosomal subunit protein uS15 (89 aa).

The protein belongs to the universal ribosomal protein uS15 family. As to quaternary structure, part of the 30S ribosomal subunit. Forms a bridge to the 50S subunit in the 70S ribosome, contacting the 23S rRNA.

Functionally, one of the primary rRNA binding proteins, it binds directly to 16S rRNA where it helps nucleate assembly of the platform of the 30S subunit by binding and bridging several RNA helices of the 16S rRNA. Forms an intersubunit bridge (bridge B4) with the 23S rRNA of the 50S subunit in the ribosome. The sequence is that of Small ribosomal subunit protein uS15 from Mesorhizobium japonicum (strain LMG 29417 / CECT 9101 / MAFF 303099) (Mesorhizobium loti (strain MAFF 303099)).